The chain runs to 371 residues: Queuine tRNA-ribosyltransferase (371 aa).

D90 serves as the catalytic Proton acceptor. Substrate contacts are provided by residues 90-94 (DSGGF), D144, Q188, and G215. Positions 246–252 (GVGTPED) are RNA binding. Residue D265 is the Nucleophile of the active site. An RNA binding; important for wobble base 34 recognition region spans residues 270–274 (TRNAR). Zn(2+) is bound by residues C303, C305, C308, and H334.

Belongs to the queuine tRNA-ribosyltransferase family. Homodimer. Within each dimer, one monomer is responsible for RNA recognition and catalysis, while the other monomer binds to the replacement base PreQ1. Requires Zn(2+) as cofactor.

The enzyme catalyses 7-aminomethyl-7-carbaguanine + guanosine(34) in tRNA = 7-aminomethyl-7-carbaguanosine(34) in tRNA + guanine. It participates in tRNA modification; tRNA-queuosine biosynthesis. Catalyzes the base-exchange of a guanine (G) residue with the queuine precursor 7-aminomethyl-7-deazaguanine (PreQ1) at position 34 (anticodon wobble position) in tRNAs with GU(N) anticodons (tRNA-Asp, -Asn, -His and -Tyr). Catalysis occurs through a double-displacement mechanism. The nucleophile active site attacks the C1' of nucleotide 34 to detach the guanine base from the RNA, forming a covalent enzyme-RNA intermediate. The proton acceptor active site deprotonates the incoming PreQ1, allowing a nucleophilic attack on the C1' of the ribose to form the product. After dissociation, two additional enzymatic reactions on the tRNA convert PreQ1 to queuine (Q), resulting in the hypermodified nucleoside queuosine (7-(((4,5-cis-dihydroxy-2-cyclopenten-1-yl)amino)methyl)-7-deazaguanosine). This Neisseria gonorrhoeae (strain ATCC 700825 / FA 1090) protein is Queuine tRNA-ribosyltransferase.